A 152-amino-acid polypeptide reads, in one-letter code: Proteolipid protein 2 (152 aa).

Residues 19–138 (FSRTKKGILL…DAYITFPLKQ (120 aa)) enclose the MARVEL domain. Helical transmembrane passes span 25–45 (GILL…FSAS), 48–68 (SAYS…LVFY), 85–105 (DFFR…VVLV), and 112–132 (RVVA…DAYI).

The protein resides in the membrane. May play a role in cell differentiation in the intestinal epithelium. In Mus musculus (Mouse), this protein is Proteolipid protein 2 (Plp2).